The sequence spans 400 residues: Formate-dependent phosphoribosylglycinamide formyltransferase (400 aa).

Residues 22 to 23 (EL) and Glu82 each bind N(1)-(5-phospho-beta-D-ribosyl)glycinamide. Residues Arg115, Lys156, 161–166 (SSGKGQ), 196–199 (EGFI), and Glu204 contribute to the ATP site. The 190-residue stretch at 120–309 (RLAAETLGLP…EFALHARAIL (190 aa)) folds into the ATP-grasp domain. Residues Glu268 and Glu280 each contribute to the Mg(2+) site. N(1)-(5-phospho-beta-D-ribosyl)glycinamide-binding positions include Asp287, Lys361, and 368–369 (RR).

The protein belongs to the PurK/PurT family. In terms of assembly, homodimer.

The catalysed reaction is N(1)-(5-phospho-beta-D-ribosyl)glycinamide + formate + ATP = N(2)-formyl-N(1)-(5-phospho-beta-D-ribosyl)glycinamide + ADP + phosphate + H(+). It participates in purine metabolism; IMP biosynthesis via de novo pathway; N(2)-formyl-N(1)-(5-phospho-D-ribosyl)glycinamide from N(1)-(5-phospho-D-ribosyl)glycinamide (formate route): step 1/1. Involved in the de novo purine biosynthesis. Catalyzes the transfer of formate to 5-phospho-ribosyl-glycinamide (GAR), producing 5-phospho-ribosyl-N-formylglycinamide (FGAR). Formate is provided by PurU via hydrolysis of 10-formyl-tetrahydrofolate. This chain is Formate-dependent phosphoribosylglycinamide formyltransferase, found in Xanthomonas axonopodis pv. citri (strain 306).